We begin with the raw amino-acid sequence, 303 residues long: Hemolysin E (303 aa).

C87 and C285 form a disulfide bridge. A helical membrane pass occupies residues 179–199; sequence AGAAAGIVAGPFGLIISYSIA.

It belongs to the hemolysin E family. Monomer and oligomer. In periplasm, it is present as a monomer, while in outer membrane vesicles, it oligomerizes to form a pore structure that is active. The pore is formed by a dodecamer. In periplasm, it forms a disulfide bond, which prevents the oligomerization. In outer membrane vesicles, the redox status prevents formation of the disulfide bond, leading to oligomerization and pore formation.

It localises to the secreted. The protein resides in the periplasm. Its subcellular location is the host cell membrane. In terms of biological role, toxin, which has some hemolytic activity towards mammalian cells. Acts by forming a pore-like structure upon contact with mammalian cells. The sequence is that of Hemolysin E (hlyE) from Salmonella typhi.